The primary structure comprises 302 residues: Acetaldehyde dehydrogenase (302 aa).

Residue Ser12 to Ile15 coordinates NAD(+). Catalysis depends on Cys127, which acts as the Acyl-thioester intermediate. NAD(+) is bound by residues Ser158–Asn166 and Asn276.

Belongs to the acetaldehyde dehydrogenase family.

It catalyses the reaction acetaldehyde + NAD(+) + CoA = acetyl-CoA + NADH + H(+). This chain is Acetaldehyde dehydrogenase (nahO), found in Geobacillus genomosp. 3.